A 119-amino-acid chain; its full sequence is Circadian clock oscillator protein KaiB (119 aa).

Belongs to the KaiB family. The KaiABC complex composition changes during the circadian cycle to control KaiC phosphorylation. Complexes KaiC(6), KaiA(2-4):KaiC(6), KaiB(6):KaiC(6) and KaiC(6):KaiB(6):KaiA(12) are among the most important forms, many form cooperatively. Undergoes a major conformational rearrangment; in the free state forms homotetramers as a dimer of dimers. When bound to the CI domain of KaiC switches to a monomeric thioredoxin-fold (KaiB(fs)). KaiB(fs) binds CikA, leading it to dephosphorylate phospho-RpaA.

Functionally, key component of the KaiABC oscillator complex, which constitutes the main circadian regulator in cyanobacteria. Complex composition changes during the circadian cycle to control KaiC phosphorylation. KaiA stimulates KaiC autophosphorylation, while KaiB sequesters KaiA, leading to KaiC autodephosphorylation. Phospho-Ser-431 KaiC accumulation triggers binding of KaiB to form the KaiB(6):KaiC(6) complex, leading to changes in output regulators CikA and SasA. KaiB switches to a thioredoxin-like fold (KaiB(fs)) when bound to KaiC. KaiB(6):KaiC(6) formation exposes a site for KaiA binding that sequesters KaiA from KaiC, making the KaiC(6):KaiB(6):KaiA(12) complex that results in KaiC autodephosphorylation. In terms of biological role, a metamorphic protein which reversibly switches between an inactive tetrameric fold and a rare, thioredoxin-like monomeric fold (KaiB(fs)). KaiB(fs) binds phospho-KaiC, KaiA and CikA. KaiA and CikA compete for binding to KaiB(fs), and KaiB(fs) and SasA compete for binding to KaiC, thus the clock oscillator and output signal pathway are tightly coupled. In Synechococcus sp. (strain CC9311), this protein is Circadian clock oscillator protein KaiB.